We begin with the raw amino-acid sequence, 572 residues long: Protein 5NUC (572 aa).

Positions 1–25 (MLFFLNFFVLVFSIELALLTASAAA) are cleaved as a signal peptide. Residues Asp-39 and His-41 each coordinate Zn(2+). Residues Cys-54 and Cys-64 are joined by a disulfide bond. The N-linked (GlcNAc...) asparagine glycan is linked to Asn-82. Asp-93, Asn-125, His-227, and His-250 together coordinate Zn(2+). Cys-360 and Cys-365 are disulfide-bonded. 4 residues coordinate substrate: Arg-361, Gln-399, Arg-404, and Phe-427. Residues Asn-454 and Asn-490 are each glycosylated (N-linked (GlcNAc...) asparagine). A disulfide bond links Cys-488 and Cys-491. Substrate is bound at residue 512–518 (FMKDGGD).

It belongs to the 5'-nucleotidase family. Zn(2+) is required as a cofactor.

It catalyses the reaction UDP-sugar + H2O = UMP + alpha-D-aldose 1-phosphate.. The catalysed reaction is a ribonucleoside 5'-phosphate + H2O = a ribonucleoside + phosphate. In terms of biological role, degradation of external UDP-glucose to uridine monophosphate and glucose-1-phosphate, which can then be used by the cell. The chain is Protein 5NUC (5NUC) from Lutzomyia longipalpis (Sand fly).